A 63-amino-acid polypeptide reads, in one-letter code: VVYTDCTESGQNLCLCEGSNVCGQGNKCILGSDGEKNQCVTGEGTPGPQSHNDGDFEEPEEYL.

An interaction with thrombin active site region spans residues 1–3; the sequence is VVY. 3 disulfides stabilise this stretch: cysteine 6–cysteine 14, cysteine 16–cysteine 28, and cysteine 22–cysteine 39. A disordered region spans residues 39–63; that stretch reads CVTGEGTPGPQSHNDGDFEEPEEYL. O-linked (GalNAc...) threonine glycosylation occurs at threonine 45. The segment at 55 to 63 is interaction with fibrinogen-binding exosite of thrombin; it reads DFEEPEEYL. The residue at position 62 (tyrosine 62) is a Sulfotyrosine.

This sequence belongs to the protease inhibitor I14 (hirudin) family.

It is found in the secreted. In terms of biological role, hirudin is a potent thrombin-specific protease inhibitor. It forms a stable non-covalent complex with alpha-thrombin, thereby abolishing its ability to cleave fibrinogen. This is Hirudin from Poecilobdella viridis (Indian freshwater leech).